Reading from the N-terminus, the 381-residue chain is Spermidine/putrescine import ATP-binding protein PotA (381 aa).

An ABC transporter domain is found at 22–252 (VELRNVFKFF…PKTSFVADFI (231 aa)). 54–61 (GPSGCGKT) is a binding site for ATP.

Belongs to the ABC transporter superfamily. Spermidine/putrescine importer (TC 3.A.1.11.1) family. The complex is composed of two ATP-binding proteins (PotA), two transmembrane proteins (PotB and PotC) and a solute-binding protein (PotD).

The protein resides in the cell inner membrane. The catalysed reaction is ATP + H2O + polyamine-[polyamine-binding protein]Side 1 = ADP + phosphate + polyamineSide 2 + [polyamine-binding protein]Side 1.. In terms of biological role, part of the ABC transporter complex PotABCD involved in spermidine/putrescine import. Responsible for energy coupling to the transport system. In Trichormus variabilis (strain ATCC 29413 / PCC 7937) (Anabaena variabilis), this protein is Spermidine/putrescine import ATP-binding protein PotA.